The sequence spans 156 residues: Ribosomal RNA large subunit methyltransferase H (156 aa).

Residues L73, G104, and 123-128 (LSPLTL) contribute to the S-adenosyl-L-methionine site.

Belongs to the RNA methyltransferase RlmH family. Homodimer.

Its subcellular location is the cytoplasm. The enzyme catalyses pseudouridine(1915) in 23S rRNA + S-adenosyl-L-methionine = N(3)-methylpseudouridine(1915) in 23S rRNA + S-adenosyl-L-homocysteine + H(+). Its function is as follows. Specifically methylates the pseudouridine at position 1915 (m3Psi1915) in 23S rRNA. This is Ribosomal RNA large subunit methyltransferase H from Edwardsiella ictaluri (strain 93-146).